The following is a 164-amino-acid chain: 3-isopropylmalate dehydratase small subunit 2 (164 aa).

This sequence belongs to the LeuD family. LeuD type 2 subfamily. Heterodimer of LeuC and LeuD.

The catalysed reaction is (2R,3S)-3-isopropylmalate = (2S)-2-isopropylmalate. Its pathway is amino-acid biosynthesis; L-leucine biosynthesis; L-leucine from 3-methyl-2-oxobutanoate: step 2/4. Functionally, catalyzes the isomerization between 2-isopropylmalate and 3-isopropylmalate, via the formation of 2-isopropylmaleate. This Pyrococcus furiosus (strain ATCC 43587 / DSM 3638 / JCM 8422 / Vc1) protein is 3-isopropylmalate dehydratase small subunit 2 (leuD2).